Reading from the N-terminus, the 489-residue chain is Retinoblastoma-binding protein 5 homolog (489 aa).

6 WD repeats span residues 22 to 63, 64 to 103, 147 to 187, 195 to 234, 248 to 290, and 292 to 330; these read DCIS…KIIS, AHVH…LEHK, DSDG…VVAS, SSAT…TLGK, VNKT…KILH, and TKGE…NWSA. The disordered stretch occupies residues 451–489; that stretch reads DVSLPDAPTDETHPLISSKASKDKQQPVGGKKAAGRTKK.

In terms of assembly, core component of several methyltransferase-containing complexes. Component of the SET1 complex, composed at least of the catalytic subunit Set1, wds/WDR5, Wdr82, Rbbp5, ash2, Cfp1/CXXC1, hcf and Dpy-30L1. Component of the MLL3/4 complex composed at least of the catalytic subunit trr, ash2, Rbbp5, Dpy-30L1, wds, hcf, ptip, Pa1, Utx, Lpt and Ncoa6.

Its subcellular location is the nucleus. Functionally, component of the SET1 complex that specifically di- and trimethylates 'Lys-4' of histone H3 and of the MLL3/4 complex which also methylates histone H3 'Lys-4'. This chain is Retinoblastoma-binding protein 5 homolog, found in Drosophila melanogaster (Fruit fly).